We begin with the raw amino-acid sequence, 516 residues long: Protein P54 (516 aa).

An N-terminal signal peptide occupies residues 1–27 (MKKSLLSAVMLSSIALTAVGSPIAAAA). The disordered stretch occupies residues 208-397 (ATAEDKKADL…PAPAPAPNPS (190 aa)). Over residues 210 to 236 (AEDKKADLNRKKAEAEAEQARIREQAR) the composition is skewed to basic and acidic residues. Low complexity-rich tracts occupy residues 237 to 247 (LAEQARQQAAQ) and 257 to 380 (QAAA…TVTP). Residues 381 to 395 (APTPTPTPAPAPAPN) are compositionally biased toward pro residues. Residues 399–516 (SVNGAAIVAE…WYTPDFAVSM (118 aa)) form the NlpC/P60 domain. Catalysis depends on Cys429, which acts as the Nucleophile. His480 functions as the Proton acceptor in the catalytic mechanism. Residue His492 is part of the active site.

This sequence belongs to the peptidase C40 family.

It is found in the secreted. Its subcellular location is the cell wall. In Enterococcus faecium (Streptococcus faecium), this protein is Protein P54.